The primary structure comprises 457 residues: Argininosuccinate lyase (457 aa).

The protein belongs to the lyase 1 family. Argininosuccinate lyase subfamily.

The protein localises to the cytoplasm. The catalysed reaction is 2-(N(omega)-L-arginino)succinate = fumarate + L-arginine. Its pathway is amino-acid biosynthesis; L-arginine biosynthesis; L-arginine from L-ornithine and carbamoyl phosphate: step 3/3. The protein is Argininosuccinate lyase of Erwinia tasmaniensis (strain DSM 17950 / CFBP 7177 / CIP 109463 / NCPPB 4357 / Et1/99).